The chain runs to 629 residues: Interleukin-23 receptor (629 aa).

Residues 1–23 (MNQVTIQWDAVIALYILFSWCHG) form the signal peptide. At 24-355 (GITNINCSGH…LTSDNRGDIG (332 aa)) the chain is on the extracellular side. Asn-29 is a glycosylation site (N-linked (GlcNAc...) asparagine; partial). 3 N-linked (GlcNAc...) asparagine glycosylation sites follow: Asn-47, Asn-81, and Asn-141. 2 consecutive Fibronectin type-III domains span residues 127 to 217 (IPDE…LDDI) and 219 to 318 (IPSA…TPET). A glycan (N-linked (GlcNAc...) (high mannose) asparagine) is linked at Asn-180. N-linked (GlcNAc...) asparagine glycans are attached at residues Asn-232 and Asn-262. N-linked (GlcNAc...) asparagine; partial glycosylation occurs at Asn-273. The helical transmembrane segment at 356 to 376 (LLLGMIVFAVMLSILSLIGIF) threads the bilayer. Topologically, residues 377-629 (NRSFRTGIKR…HFNRISLLEK (253 aa)) are cytoplasmic.

This sequence belongs to the type I cytokine receptor family. Type 2 subfamily. Heterodimer with IL12RB1. In presence of IL23, the heterodimer forms the IL23 receptor. Interacts with JAK2 and in presence of IL23 with STAT3. In terms of processing, phosphorylated in response to IL23. As to expression, expressed by monocytes, Th1, Th0, NK and dendritic cells. Isoform 1 is specifically expressed in NK cells.

Its subcellular location is the cell membrane. Its function is as follows. Associates with IL12RB1 to form the interleukin-23 receptor. Binds IL23 and mediates T-cells, NK cells and possibly certain macrophage/myeloid cells stimulation probably through activation of the Jak-Stat signaling cascade. IL23 functions in innate and adaptive immunity and may participate in acute response to infection in peripheral tissues. IL23 may be responsible for autoimmune inflammatory diseases and be important for tumorigenesis. The polypeptide is Interleukin-23 receptor (IL23R) (Homo sapiens (Human)).